A 305-amino-acid polypeptide reads, in one-letter code: Glycerol-3-phosphate dehydrogenase [NAD(P)+] (305 aa).

NADPH is bound by residues tryptophan 11, arginine 31, and lysine 79. Sn-glycerol 3-phosphate-binding residues include lysine 79 and glycine 107. Position 111 (alanine 111) interacts with NADPH. Residues lysine 162, aspartate 215, serine 225, arginine 226, and asparagine 227 each coordinate sn-glycerol 3-phosphate. Catalysis depends on lysine 162, which acts as the Proton acceptor. NADPH is bound at residue arginine 226. Glutamate 252 is an NADPH binding site.

This sequence belongs to the NAD-dependent glycerol-3-phosphate dehydrogenase family.

The protein localises to the cytoplasm. It carries out the reaction sn-glycerol 3-phosphate + NAD(+) = dihydroxyacetone phosphate + NADH + H(+). It catalyses the reaction sn-glycerol 3-phosphate + NADP(+) = dihydroxyacetone phosphate + NADPH + H(+). It participates in membrane lipid metabolism; glycerophospholipid metabolism. Its function is as follows. Catalyzes the reduction of the glycolytic intermediate dihydroxyacetone phosphate (DHAP) to sn-glycerol 3-phosphate (G3P), the key precursor for phospholipid synthesis. In Gloeobacter violaceus (strain ATCC 29082 / PCC 7421), this protein is Glycerol-3-phosphate dehydrogenase [NAD(P)+].